The primary structure comprises 158 residues: Non-secretory ribonuclease (158 aa).

The first 27 residues, 1–27 (MVPKLFTSQICLLLLLGLSSLEVSLHA), serve as a signal peptide directing secretion. C-linked (Man) tryptophan glycosylation is present at W34. The active-site Proton acceptor is H42. Residue Y60 is modified to 3'-nitrotyrosine. Residue 65-69 (KNRNT) participates in substrate binding. 3 N-linked (GlcNAc...) asparagine glycosylation sites follow: N86, N92, and N111. Catalysis depends on H153, which acts as the Proton donor.

The protein belongs to the pancreatic ribonuclease family. As to quaternary structure, interacts with and forms a tight 1:1 complex with RNH1. Dimerization of two such complexes may occur.

The protein localises to the lysosome. Its subcellular location is the cytoplasmic granule. The enzyme catalyses an [RNA] containing cytidine + H2O = an [RNA]-3'-cytidine-3'-phosphate + a 5'-hydroxy-ribonucleotide-3'-[RNA].. It carries out the reaction an [RNA] containing uridine + H2O = an [RNA]-3'-uridine-3'-phosphate + a 5'-hydroxy-ribonucleotide-3'-[RNA].. Its function is as follows. This is a non-secretory ribonuclease. It is a pyrimidine specific nuclease with a slight preference for U. Cytotoxin and helminthotoxin. Possesses a wide variety of biological activities. The chain is Non-secretory ribonuclease (RNASE2) from Saguinus labiatus (Red-chested mustached tamarin).